Reading from the N-terminus, the 213-residue chain is ATP phosphoribosyltransferase (213 aa).

Belongs to the ATP phosphoribosyltransferase family. Short subfamily. As to quaternary structure, heteromultimer composed of HisG and HisZ subunits.

The protein localises to the cytoplasm. The enzyme catalyses 1-(5-phospho-beta-D-ribosyl)-ATP + diphosphate = 5-phospho-alpha-D-ribose 1-diphosphate + ATP. It participates in amino-acid biosynthesis; L-histidine biosynthesis; L-histidine from 5-phospho-alpha-D-ribose 1-diphosphate: step 1/9. Its function is as follows. Catalyzes the condensation of ATP and 5-phosphoribose 1-diphosphate to form N'-(5'-phosphoribosyl)-ATP (PR-ATP). Has a crucial role in the pathway because the rate of histidine biosynthesis seems to be controlled primarily by regulation of HisG enzymatic activity. The protein is ATP phosphoribosyltransferase of Teredinibacter turnerae (strain ATCC 39867 / T7901).